We begin with the raw amino-acid sequence, 251 residues long: Flap endonuclease Xni (251 aa).

Aspartate 104 lines the Mg(2+) pocket. One can recognise a 5'-3' exonuclease domain in the interval 160 to 249; that stretch reads VSPGQLADFW…LDGNLQQLRL (90 aa). Residues leucine 171, alanine 172, proline 180, valine 182, and isoleucine 185 each coordinate K(+). The segment at 184 to 189 is interaction with DNA; it reads GIGPKS.

The protein belongs to the Xni family. Mg(2+) is required as a cofactor. The cofactor is K(+).

In terms of biological role, has flap endonuclease activity. During DNA replication, flap endonucleases cleave the 5'-overhanging flap structure that is generated by displacement synthesis when DNA polymerase encounters the 5'-end of a downstream Okazaki fragment. This is Flap endonuclease Xni from Cronobacter sakazakii (strain ATCC BAA-894) (Enterobacter sakazakii).